Here is a 235-residue protein sequence, read N- to C-terminus: Phosphoribosylaminoimidazole-succinocarboxamide synthase (235 aa).

Belongs to the SAICAR synthetase family.

The catalysed reaction is 5-amino-1-(5-phospho-D-ribosyl)imidazole-4-carboxylate + L-aspartate + ATP = (2S)-2-[5-amino-1-(5-phospho-beta-D-ribosyl)imidazole-4-carboxamido]succinate + ADP + phosphate + 2 H(+). Its pathway is purine metabolism; IMP biosynthesis via de novo pathway; 5-amino-1-(5-phospho-D-ribosyl)imidazole-4-carboxamide from 5-amino-1-(5-phospho-D-ribosyl)imidazole-4-carboxylate: step 1/2. This chain is Phosphoribosylaminoimidazole-succinocarboxamide synthase, found in Chlorobaculum tepidum (strain ATCC 49652 / DSM 12025 / NBRC 103806 / TLS) (Chlorobium tepidum).